Here is a 341-residue protein sequence, read N- to C-terminus: MKALSKLKAEKGIWLVDAPKPEMGHNDLLIKIKKTAICGTDMHIYNWDEWSQKTIPVPMVVGHEYVGEVVDIGQEVRGFKIGDRVSGEGHITCGHCRNCRAGRTHLCRNTSGVGVNREGSFAEYLVIPAFNAFKIPDDISDDLASIFDPFGNAVHTALSFDLVGEDVLITGAGPIGIMAAAVCRHVGARHVVITDVNEYRLELARKMGATRAVNVAQENLKDVMKELGMTEGFDVGLEMSGVPSAFHAMLDTMNHGGKIAMLGIPGGEMAIDWSKVIFKGLVIKGIYGREMFETWYKMASLIQSGLDISPIITHHYKIDDFQKGFDAMGSGQSGKVILSWD.

Cys-38 contacts Zn(2+). Residues Thr-40 and His-43 each act as charge relay system in the active site. Zn(2+)-binding residues include His-63, Glu-64, Cys-93, Cys-96, Cys-99, and Cys-107. NAD(+) contacts are provided by residues Ile-175, Asp-195, Arg-200, 262-264 (LGI), and 286-287 (IY).

This sequence belongs to the zinc-containing alcohol dehydrogenase family. In terms of assembly, homotetramer. It depends on Zn(2+) as a cofactor.

The protein localises to the cytoplasm. It carries out the reaction L-threonine + NAD(+) = (2S)-2-amino-3-oxobutanoate + NADH + H(+). Its pathway is amino-acid degradation; L-threonine degradation via oxydo-reductase pathway; glycine from L-threonine: step 1/2. In terms of biological role, catalyzes the NAD(+)-dependent oxidation of L-threonine to 2-amino-3-ketobutyrate. The chain is L-threonine 3-dehydrogenase from Shewanella sp. (strain MR-7).